A 479-amino-acid polypeptide reads, in one-letter code: PTS system sucrose-specific EIIBC component (479 aa).

The PTS EIIB type-1 domain occupies 4–87 (PAVAKELLTL…AKLTGMSEMS (84 aa)). Catalysis depends on cysteine 26, which acts as the Phosphocysteine intermediate; for EIIB activity. Helical transmembrane passes span 112–132 (IFVP…IYNL), 158–178 (MINT…AFSA), 182–202 (FGGN…PDLL), 204–224 (GWGF…ILGF), 232–252 (QGSV…ELGL), 264–284 (LTPL…VGPF), 303–323 (AGFV…ITGM), 345–365 (FIFP…LAVG), 376–396 (IAIP…MFGV), 403–423 (PFIA…MFNV), and 448–468 (IAGM…LGIG). A PTS EIIC type-1 domain is found at 120 to 477 (IVAGGLLMGI…GDRAKVGKKA (358 aa)).

Its subcellular location is the cell inner membrane. The enzyme catalyses N(pros)-phospho-L-histidyl-[protein](out) + sucrose = sucrose 6(G)-phosphate(in) + L-histidyl-[protein]. Its function is as follows. The phosphoenolpyruvate-dependent sugar phosphotransferase system (sugar PTS), a major carbohydrate active transport system, catalyzes the phosphorylation of incoming sugar substrates concomitantly with their translocation across the cell membrane. This system is involved in sucrose transport. In Vibrio alginolyticus, this protein is PTS system sucrose-specific EIIBC component.